The chain runs to 280 residues: Putative ABC transporter ATP-binding protein PYRAB03730 (280 aa).

Residues 4 to 244 form the ABC transporter domain; it reads IEVENVSFKY…VEFLERIGIR (241 aa). Residue 38–45 coordinates ATP; it reads GPSGSGKS.

It belongs to the ABC transporter superfamily.

The protein localises to the cell membrane. Functionally, probably part of an ABC transporter complex. Responsible for energy coupling to the transport system. This Pyrococcus abyssi (strain GE5 / Orsay) protein is Putative ABC transporter ATP-binding protein PYRAB03730.